The sequence spans 951 residues: Bifunctional glutamine synthetase adenylyltransferase/adenylyl-removing enzyme (951 aa).

Residues 1–445 (MSILPLPALP…VFDELIGDDA (445 aa)) form an adenylyl removase region. The adenylyl transferase stretch occupies residues 454-951 (HSSYSSLWQD…VSWNKWLMGA (498 aa)).

Belongs to the GlnE family. Requires Mg(2+) as cofactor.

It carries out the reaction [glutamine synthetase]-O(4)-(5'-adenylyl)-L-tyrosine + phosphate = [glutamine synthetase]-L-tyrosine + ADP. The enzyme catalyses [glutamine synthetase]-L-tyrosine + ATP = [glutamine synthetase]-O(4)-(5'-adenylyl)-L-tyrosine + diphosphate. Its function is as follows. Involved in the regulation of glutamine synthetase GlnA, a key enzyme in the process to assimilate ammonia. When cellular nitrogen levels are high, the C-terminal adenylyl transferase (AT) inactivates GlnA by covalent transfer of an adenylyl group from ATP to specific tyrosine residue of GlnA, thus reducing its activity. Conversely, when nitrogen levels are low, the N-terminal adenylyl removase (AR) activates GlnA by removing the adenylyl group by phosphorolysis, increasing its activity. The regulatory region of GlnE binds the signal transduction protein PII (GlnB) which indicates the nitrogen status of the cell. The sequence is that of Bifunctional glutamine synthetase adenylyltransferase/adenylyl-removing enzyme from Pectobacterium atrosepticum (strain SCRI 1043 / ATCC BAA-672) (Erwinia carotovora subsp. atroseptica).